A 590-amino-acid polypeptide reads, in one-letter code: Zinc finger protein 285 (590 aa).

The KRAB domain occupies V8–V86. The segment at F232–H254 adopts a C2H2-type 1 zinc-finger fold. The segment at Y260–H282 adopts a C2H2-type 2; degenerate zinc-finger fold. 9 consecutive C2H2-type zinc fingers follow at residues Y316–H338, Y344–H366, Y372–H394, Y400–H422, Y428–H450, Y456–H478, Y484–H506, Y512–H534, and Y540–H562.

The protein belongs to the krueppel C2H2-type zinc-finger protein family.

It localises to the nucleus. Its function is as follows. May be involved in transcriptional regulation. This is Zinc finger protein 285 (ZNF285) from Homo sapiens (Human).